Here is a 478-residue protein sequence, read N- to C-terminus: Noelin-2 (478 aa).

The N-terminal stretch at 1–16 (MSVPLLKIGAVLSTMA) is a signal peptide. N-linked (GlcNAc...) asparagine glycosylation is found at asparagine 33, asparagine 98, asparagine 179, asparagine 299, asparagine 334, asparagine 423, and asparagine 465. Coiled coils occupy residues 86-109 (SREL…LELR) and 160-218 (LEQY…QKLG). The 253-residue stretch at 218–470 (GCGKLTGVSN…QVLYNVTLFH (253 aa)) folds into the Olfactomedin-like domain. A disulfide bridge connects residues cysteine 219 and cysteine 401.

As to quaternary structure, peripherally associated with AMPAR complex. AMPAR complex consists of an inner core made of 4 pore-forming GluA/GRIA proteins (GRIA1, GRIA2, GRIA3 and GRIA4) and 4 major auxiliary subunits arranged in a twofold symmetry. One of the two pairs of distinct binding sites is occupied either by CNIH2, CNIH3 or CACNG2, CACNG3. The other harbors CACNG2, CACNG3, CACNG4, CACNG8 or GSG1L. This inner core of AMPAR complex is complemented by outer core constituents binding directly to the GluA/GRIA proteins at sites distinct from the interaction sites of the inner core constituents. Outer core constituents include at least PRRT1, PRRT2, CKAMP44/SHISA9, FRRS1L and NRN1. The proteins of the inner and outer core serve as a platform for other, more peripherally associated AMPAR constituents, including OLFM2. Alone or in combination, these auxiliary subunits control the gating and pharmacology of the AMPAR complex and profoundly impact their biogenesis and protein processing. Interacts with GRIA2. Interacts with OLFM1 and OLFM3. Interacts with SRF; the interaction promotes dissociation of SRF from the transcriptional repressor HEY2. Interacts with RUNX2. As to expression, expressed in the brain (at protein level). Expressed in carotid arteries and the aorta, mainly in aortic SMCs.

Its subcellular location is the secreted. It localises to the synapse. The protein localises to the membrane. It is found in the nucleus. The protein resides in the cytoplasm. Involved in transforming growth factor beta (TGF-beta)-induced smooth muscle differentiation. TGF-beta induces expression and nuclear translocation of OLFM2 where it binds to SRF, causing its dissociation from the transcriptional repressor HEY2/HERP1 and facilitating binding of SRF to target genes. Plays a role in AMPAR complex organization. Is a regulator of vascular smooth-muscle cell (SMC) phenotypic switching, that acts by promoting RUNX2 and inhibiting MYOCD binding to SRF. SMC phenotypic switching is the process through which vascular SMCs undergo transition between a quiescent contractile phenotype and a proliferative synthetic phenotype in response to pathological stimuli. SMC phenotypic plasticity is essential for vascular development and remodeling. In Rattus norvegicus (Rat), this protein is Noelin-2 (Olfm2).